A 301-amino-acid chain; its full sequence is Ribonuclease H2 subunit A (301 aa).

Methionine 1 carries the post-translational modification N-acetylmethionine. In terms of domain architecture, RNase H type-2 spans 28–251; the sequence is PCVLGVDEAG…AQAILEKEAE (224 aa). Aspartate 34, glutamate 35, and aspartate 142 together coordinate a divalent metal cation. The residue at position 217 (threonine 217) is a Phosphothreonine. Residues 255 to 264 show a composition bias toward acidic residues; that stretch reads WEDSEAEEDP. Residues 255-284 form a disordered region; it reads WEDSEAEEDPERPGKITSYFSQGPQTCRPQ. Serine 258 is modified (phosphoserine). The span at 272 to 282 shows a compositional bias: polar residues; that stretch reads SYFSQGPQTCR.

It belongs to the RNase HII family. Eukaryotic subfamily. The RNase H2 complex is a heterotrimer composed of the catalytic subunit RNASEH2A and the non-catalytic subunits RNASEH2B and RNASEH2C. The cofactor is Mn(2+). Requires Mg(2+) as cofactor.

The protein localises to the nucleus. It catalyses the reaction Endonucleolytic cleavage to 5'-phosphomonoester.. In terms of biological role, catalytic subunit of RNase HII, an endonuclease that specifically degrades the RNA of RNA:DNA hybrids. Participates in DNA replication, possibly by mediating the removal of lagging-strand Okazaki fragment RNA primers during DNA replication. Mediates the excision of single ribonucleotides from DNA:RNA duplexes. The protein is Ribonuclease H2 subunit A (Rnaseh2a) of Mus musculus (Mouse).